The primary structure comprises 366 residues: MSAPLKRTPLAEEHLAAGACMVDFGGWDMPLAYGSQLEEHHAVRQDAGMFDVSHMLNVDVGGADATAFLRRLVANDVARLATPGKALYSCMLNPQGGIIDDLIIYYFAPDQWRVVVNAGTADKDIAWMQRVAAADGFDVVIAPRRDLAMVAVQGPNARAKVWAARPAWQAASEPLAPFSAAAVEAGTLVARTGYTGEDGFEIVLPADAVVQLWRDLLAQGVRPCGLGARDTLRLEAGMNLYGQDMDELVHPDQAGLSWTVALKDEARRFVGRDAIEQFAVPRAFVGLKLQERGVMRAHMPVRCAQGMGELTSGTMSPTLGVSVGFARMPVGVQPGDAVEVEIRGKWVPALVCKLPFVRHGKAVEHS.

It belongs to the GcvT family. In terms of assembly, the glycine cleavage system is composed of four proteins: P, T, L and H.

The enzyme catalyses N(6)-[(R)-S(8)-aminomethyldihydrolipoyl]-L-lysyl-[protein] + (6S)-5,6,7,8-tetrahydrofolate = N(6)-[(R)-dihydrolipoyl]-L-lysyl-[protein] + (6R)-5,10-methylene-5,6,7,8-tetrahydrofolate + NH4(+). Functionally, the glycine cleavage system catalyzes the degradation of glycine. The chain is Aminomethyltransferase from Bordetella pertussis (strain Tohama I / ATCC BAA-589 / NCTC 13251).